Here is a 417-residue protein sequence, read N- to C-terminus: Tyrosine--tRNA ligase (417 aa).

Tyr39 serves as a coordination point for L-tyrosine. The 'HIGH' region signature appears at 44–53 (CTAPSLHVGH). Positions 176 and 180 each coordinate L-tyrosine. The 'KMSKS' region motif lies at 236 to 240 (KMGKT). Position 239 (Lys239) interacts with ATP. The region spanning 350–417 (AGVLALFVKA…KKRHVLLRPA (68 aa)) is the S4 RNA-binding domain.

This sequence belongs to the class-I aminoacyl-tRNA synthetase family. TyrS type 1 subfamily. As to quaternary structure, homodimer.

It is found in the cytoplasm. The catalysed reaction is tRNA(Tyr) + L-tyrosine + ATP = L-tyrosyl-tRNA(Tyr) + AMP + diphosphate + H(+). Functionally, catalyzes the attachment of tyrosine to tRNA(Tyr) in a two-step reaction: tyrosine is first activated by ATP to form Tyr-AMP and then transferred to the acceptor end of tRNA(Tyr). The sequence is that of Tyrosine--tRNA ligase from Nitrobacter winogradskyi (strain ATCC 25391 / DSM 10237 / CIP 104748 / NCIMB 11846 / Nb-255).